The primary structure comprises 225 residues: Dehydrin DHN4 (225 aa).

The segment at 1–78 is disordered; the sequence is MEYQGQQHGR…EDDGMGGRRK (78 aa). Residues 21–39 are compositionally biased toward gly residues; that stretch reads HGVGTGMGTHGGVGTGAAA. Repeat copies occupy residues 105 to 118, 119 to 136, 137 to 159, 160 to 178, and 179 to 199. Positions 105–199 are 5 X approximate tandem repeats; sequence YGQQGTGMAG…GTGMHGTGGT (95 aa).

It belongs to the plant dehydrin family.

The protein is Dehydrin DHN4 (DHN4) of Hordeum vulgare (Barley).